The primary structure comprises 815 residues: Heme-copper oxidase subunit I+III (815 aa).

A COX1 region spans residues 1-467 (MVSRLRGFLA…QLSTLGAFIF (467 aa)). A helical transmembrane segment spans residues 26-46 (LLYLVTSIAFLLIAGSLALLF). Fe(II)-heme a is bound at residue H70. 18 consecutive transmembrane segments (helical) span residues 71-91 (GLIM…NYIV), 105-125 (LNAL…ASFF), 157-177 (LAIF…LVTI), 197-217 (ILFT…GGAL), 242-262 (LFWF…LGAM), 281-301 (LTAF…HMFI), 314-334 (ITTI…IFTL), 339-359 (LVYT…IIGG), 380-400 (VVAH…IAGL), 419-439 (IHFA…FALM), 463-483 (GAFI…YSLV), 580-600 (ALFG…VFLL), 637-657 (WVFI…YFFI), 683-703 (LINT…YLGV), 708-728 (YLIT…FLTV), 736-756 (LLIA…YVTT), 758-778 (AHAL…VKLF), and 791-811 (VLAV…VFPL). Cu cation contacts are provided by H248, Y252, H297, and H298. Residues 248 to 252 (HPEVY) constitute a cross-link (1'-histidyl-3'-tyrosine (His-Tyr)). H383 serves as a coordination point for heme a3. H385 is a binding site for Fe(II)-heme a. Residues 545-815 (DVSNVPLSGG…TLVFPLYYLV (271 aa)) are COX3.

In the N-terminal section; belongs to the heme-copper respiratory oxidase family. The protein in the C-terminal section; belongs to the cytochrome c oxidase subunit 3 family. The cofactor is heme. Cu cation serves as cofactor.

The protein resides in the cell membrane. The chain is Heme-copper oxidase subunit I+III (aoxB) from Aeropyrum pernix (strain ATCC 700893 / DSM 11879 / JCM 9820 / NBRC 100138 / K1).